We begin with the raw amino-acid sequence, 360 residues long: Homoserine O-acetyltransferase (360 aa).

In terms of domain architecture, AB hydrolase-1 spans 41–344 (NAILICHALT…DYGHDAFLVD (304 aa)). Ser-144 serves as the catalytic Nucleophile. Arg-213 lines the substrate pocket. Residues Asp-305 and His-338 contribute to the active site. Asp-339 contributes to the substrate binding site.

It belongs to the AB hydrolase superfamily. MetX family. Homodimer.

The protein resides in the cytoplasm. The catalysed reaction is L-homoserine + acetyl-CoA = O-acetyl-L-homoserine + CoA. Its pathway is amino-acid biosynthesis; L-methionine biosynthesis via de novo pathway; O-acetyl-L-homoserine from L-homoserine: step 1/1. In terms of biological role, transfers an acetyl group from acetyl-CoA to L-homoserine, forming acetyl-L-homoserine. The protein is Homoserine O-acetyltransferase of Pasteurella multocida (strain Pm70).